The primary structure comprises 501 residues: Proline--tRNA ligase (501 aa).

This sequence belongs to the class-II aminoacyl-tRNA synthetase family. ProS type 3 subfamily. As to quaternary structure, homodimer.

The protein localises to the cytoplasm. The catalysed reaction is tRNA(Pro) + L-proline + ATP = L-prolyl-tRNA(Pro) + AMP + diphosphate. Its function is as follows. Catalyzes the attachment of proline to tRNA(Pro) in a two-step reaction: proline is first activated by ATP to form Pro-AMP and then transferred to the acceptor end of tRNA(Pro). The chain is Proline--tRNA ligase from Halobacterium salinarum (strain ATCC 29341 / DSM 671 / R1).